Consider the following 286-residue polypeptide: Polyamine aminopropyltransferase (286 aa).

The PABS domain maps to 5-242; the sequence is DNWFTEVLEE…GWWSATLASK (238 aa). Q35 lines the S-methyl-5'-thioadenosine pocket. Residues H66 and D90 each coordinate spermidine. Residues D110 and 141–142 each bind S-methyl-5'-thioadenosine; that span reads DG. D160 acts as the Proton acceptor in catalysis. A spermidine-binding site is contributed by 160–163; it reads DSTD.

Belongs to the spermidine/spermine synthase family. As to quaternary structure, homodimer or homotetramer.

It localises to the cytoplasm. It carries out the reaction S-adenosyl 3-(methylsulfanyl)propylamine + putrescine = S-methyl-5'-thioadenosine + spermidine + H(+). The protein operates within amine and polyamine biosynthesis; spermidine biosynthesis; spermidine from putrescine: step 1/1. Catalyzes the irreversible transfer of a propylamine group from the amino donor S-adenosylmethioninamine (decarboxy-AdoMet) to putrescine (1,4-diaminobutane) to yield spermidine. In Alkalilimnicola ehrlichii (strain ATCC BAA-1101 / DSM 17681 / MLHE-1), this protein is Polyamine aminopropyltransferase.